Consider the following 356-residue polypeptide: Photosystem II protein D1 4 (356 aa).

3 helical membrane-spanning segments follow: residues 32-49 (YIGWFGVLSIPTLLAATT), 121-136 (HFLIGIWCLLGRFWEL), and 145-159 (WIAVAYSAPVIAATS). Histidine 121 is a binding site for chlorophyll a. [CaMn4O5] cluster contacts are provided by aspartate 173 and aspartate 192. Residues 200–221 (FHMLGVAGVFGGALLSSLHGSL) form a helical membrane-spanning segment. Chlorophyll a is bound at residue histidine 201. Histidine 218 contacts a quinone. 2 residues coordinate Fe cation: histidine 218 and histidine 276. The helical transmembrane segment at 278–292 (LLAALPTIGIWFAAM) threads the bilayer. Histidine 336 serves as a coordination point for [CaMn4O5] cluster.

This sequence belongs to the reaction center PufL/M/PsbA/D family. In terms of assembly, PSII is composed of 1 copy each of membrane proteins PsbA, PsbB, PsbC, PsbD, PsbE, PsbF, PsbH, PsbI, PsbJ, PsbK, PsbL, PsbM, PsbT, PsbX, PsbY, PsbZ, Psb30/Ycf12, peripheral proteins PsbO, CyanoQ (PsbQ), PsbU, PsbV and a large number of cofactors. It forms dimeric complexes. The D1/D2 heterodimer binds P680, chlorophylls that are the primary electron donor of PSII, and subsequent electron acceptors. It shares a non-heme iron and each subunit binds pheophytin, quinone, additional chlorophylls, carotenoids and lipids. D1 provides most of the ligands for the Mn4-Ca-O5 cluster of the oxygen-evolving complex (OEC). There is also a Cl(-1) ion associated with D1 and D2, which is required for oxygen evolution. The PSII complex binds additional chlorophylls, carotenoids and specific lipids. is required as a cofactor. In terms of processing, tyr-164 forms a radical intermediate that is referred to as redox-active TyrZ, YZ or Y-Z.

It is found in the cellular thylakoid membrane. The catalysed reaction is 2 a plastoquinone + 4 hnu + 2 H2O = 2 a plastoquinol + O2. Its function is as follows. Photosystem II (PSII) is a light-driven water:plastoquinone oxidoreductase that uses light energy to abstract electrons from H(2)O, generating O(2) and a proton gradient subsequently used for ATP formation. It consists of a core antenna complex that captures photons, and an electron transfer chain that converts photonic excitation into a charge separation. The D1/D2 (PsbA/PsbD) reaction center heterodimer binds P680, the primary electron donor of PSII as well as several subsequent electron acceptors. The chain is Photosystem II protein D1 4 from Trichormus variabilis (strain ATCC 29413 / PCC 7937) (Anabaena variabilis).